The sequence spans 354 residues: Uroporphyrinogen decarboxylase (354 aa).

Residues 30–34 (RQAGR), Asp79, Tyr154, Ser209, and His333 contribute to the substrate site.

The protein belongs to the uroporphyrinogen decarboxylase family. In terms of assembly, homodimer.

It localises to the cytoplasm. It carries out the reaction uroporphyrinogen III + 4 H(+) = coproporphyrinogen III + 4 CO2. Its pathway is porphyrin-containing compound metabolism; protoporphyrin-IX biosynthesis; coproporphyrinogen-III from 5-aminolevulinate: step 4/4. In terms of biological role, catalyzes the decarboxylation of four acetate groups of uroporphyrinogen-III to yield coproporphyrinogen-III. This is Uroporphyrinogen decarboxylase from Mycolicibacterium vanbaalenii (strain DSM 7251 / JCM 13017 / BCRC 16820 / KCTC 9966 / NRRL B-24157 / PYR-1) (Mycobacterium vanbaalenii).